A 148-amino-acid chain; its full sequence is Transcriptional regulator MraZ (148 aa).

2 consecutive SpoVT-AbrB domains span residues 5–51 (VSIL…PEPN) and 80–123 (AETL…NAEE).

This sequence belongs to the MraZ family. Forms oligomers.

The protein localises to the cytoplasm. It localises to the nucleoid. The chain is Transcriptional regulator MraZ from Chromobacterium violaceum (strain ATCC 12472 / DSM 30191 / JCM 1249 / CCUG 213 / NBRC 12614 / NCIMB 9131 / NCTC 9757 / MK).